A 159-amino-acid polypeptide reads, in one-letter code: Small ribosomal subunit protein uS17 (159 aa).

It belongs to the universal ribosomal protein uS17 family.

The chain is Small ribosomal subunit protein uS17 (RPS11) from Euphorbia esula (Leafy spurge).